Reading from the N-terminus, the 126-residue chain is Histone H2B type 1-J (126 aa).

A compositionally biased stretch (low complexity) spans 1–12 (MPEPAKSAPAPK). Residues 1–35 (MPEPAKSAPAPKKGSKKAVTKAQKKDGKKRKRSRK) form a disordered region. An N-acetylproline modification is found at Pro2. Glu3 carries the post-translational modification ADP-ribosyl glutamic acid. Lys6 bears the N6-(2-hydroxyisobutyryl)lysine; alternate mark. An N6-(beta-hydroxybutyryl)lysine; alternate modification is found at Lys6. N6-acetyllysine; alternate is present on Lys6. Lys6 is subject to N6-butyryllysine; alternate. Lys6 is subject to N6-crotonyllysine; alternate. At Lys6 the chain carries N6-lactoyllysine; alternate. Lys6 participates in a covalent cross-link: Glycyl lysine isopeptide (Lys-Gly) (interchain with G-Cter in SUMO2); alternate. Ser7 carries the post-translational modification ADP-ribosylserine. Position 12 is an N6-(beta-hydroxybutyryl)lysine; alternate (Lys12). Residues Lys12 and Lys13 each carry the N6-acetyllysine; alternate modification. 2 positions are modified to N6-crotonyllysine; alternate: Lys12 and Lys13. Position 12 is an N6-lactoyllysine; alternate (Lys12). Lys13 bears the N6-(2-hydroxyisobutyryl)lysine; alternate mark. Phosphoserine; by STK4/MST1 is present on Ser15. N6-acetyllysine; alternate occurs at positions 16, 17, 21, and 24. N6-crotonyllysine; alternate is present on residues Lys16, Lys17, Lys21, and Lys24. Residues Lys16, Lys17, Lys21, and Lys24 each carry the N6-lactoyllysine; alternate modification. 2 positions are modified to N6-(beta-hydroxybutyryl)lysine; alternate: Lys17 and Lys21. Position 17 is an N6-glutaryllysine; alternate (Lys17). 2 positions are modified to N6-(2-hydroxyisobutyryl)lysine; alternate: Lys21 and Lys24. Residue Lys21 is modified to N6-butyryllysine; alternate. Residue Lys21 forms a Glycyl lysine isopeptide (Lys-Gly) (interchain with G-Cter in SUMO2); alternate linkage. Residue Lys25 is modified to N6-(2-hydroxyisobutyryl)lysine. An N6-(2-hydroxyisobutyryl)lysine; alternate modification is found at Lys35. At Lys35 the chain carries N6-(beta-hydroxybutyryl)lysine; alternate. N6-crotonyllysine; alternate is present on Lys35. Residue Lys35 is modified to N6-glutaryllysine; alternate. Lys35 is subject to N6-succinyllysine; alternate. Lys35 is covalently cross-linked (Glycyl lysine isopeptide (Lys-Gly) (interchain with G-Cter in ubiquitin); alternate). Residue Glu36 is modified to PolyADP-ribosyl glutamic acid. Residue Ser37 is modified to Phosphoserine; by AMPK. Lys44, Lys47, and Lys58 each carry N6-(2-hydroxyisobutyryl)lysine; alternate. Position 44 is an N6-lactoyllysine; alternate (Lys44). An N6-glutaryllysine; alternate mark is found at Lys44 and Lys47. Lys47 is subject to N6-methyllysine; alternate. Lys58 is subject to N6,N6-dimethyllysine; alternate. Arg80 is modified (dimethylated arginine). Position 86 is an N6-(2-hydroxyisobutyryl)lysine; alternate (Lys86). Residue Lys86 is modified to N6-(beta-hydroxybutyryl)lysine; alternate. Lys86 is modified (N6-acetyllysine; alternate). An N6-lactoyllysine; alternate modification is found at Lys86. Lys86 bears the N6,N6,N6-trimethyllysine; alternate mark. Arg87 and Arg93 each carry omega-N-methylarginine. The residue at position 109 (Lys109) is an N6-(2-hydroxyisobutyryl)lysine; alternate. Lys109 carries the post-translational modification N6-lactoyllysine; alternate. Position 109 is an N6-glutaryllysine; alternate (Lys109). Lys109 carries the post-translational modification N6-methyllysine; alternate. An O-linked (GlcNAc) serine glycan is attached at Ser113. Phosphothreonine is present on Thr116. An N6-(2-hydroxyisobutyryl)lysine; alternate mark is found at Lys117 and Lys121. 2 positions are modified to N6-(beta-hydroxybutyryl)lysine; alternate: Lys117 and Lys121. N6-lactoyllysine; alternate occurs at positions 117 and 121. Lys117 and Lys121 each carry N6-glutaryllysine; alternate. Residues Lys117 and Lys121 each carry the N6-succinyllysine; alternate modification. Position 117 is an N6-malonyllysine; alternate (Lys117). Lys117 is modified (N6-methylated lysine; alternate). A Glycyl lysine isopeptide (Lys-Gly) (interchain with G-Cter in ubiquitin); alternate cross-link involves residue Lys121.

Belongs to the histone H2B family. In terms of assembly, the nucleosome is a histone octamer containing two molecules each of H2A, H2B, H3 and H4 assembled in one H3-H4 heterotetramer and two H2A-H2B heterodimers. The octamer wraps approximately 147 bp of DNA. Heterodimer H2BC11 and H2AZ1 interacts with VPS72 (via N-terminal domain). Monoubiquitination at Lys-35 (H2BK34Ub) by the MSL1/MSL2 dimer is required for histone H3 'Lys-4' (H3K4me) and 'Lys-79' (H3K79me) methylation and transcription activation at specific gene loci, such as HOXA9 and MEIS1 loci. Similarly, monoubiquitination at Lys-121 (H2BK120Ub) by the RNF20/40 complex gives a specific tag for epigenetic transcriptional activation and is also prerequisite for histone H3 'Lys-4' and 'Lys-79' methylation. It also functions cooperatively with the FACT dimer to stimulate elongation by RNA polymerase II. H2BK120Ub also acts as a regulator of mRNA splicing: deubiquitination by USP49 is required for efficient cotranscriptional splicing of a large set of exons. Post-translationally, phosphorylation at Ser-37 (H2BS36ph) by AMPK in response to stress promotes transcription. Phosphorylated on Ser-15 (H2BS14ph) by STK4/MST1 during apoptosis; which facilitates apoptotic chromatin condensation. Also phosphorylated on Ser-15 in response to DNA double strand breaks (DSBs), and in correlation with somatic hypermutation and immunoglobulin class-switch recombination. In terms of processing, glcNAcylation at Ser-113 promotes monoubiquitination of Lys-121. It fluctuates in response to extracellular glucose, and associates with transcribed genes. ADP-ribosylated by PARP1 or PARP2 on Ser-7 (H2BS6ADPr) in response to DNA damage. H2BS6ADPr promotes recruitment of CHD1L. Mono-ADP-ribosylated on Glu-3 (H2BE2ADPr) by PARP3 in response to single-strand breaks. Poly ADP-ribosylation on Glu-36 (H2BE35ADPr) by PARP1 regulates adipogenesis: it inhibits phosphorylation at Ser-37 (H2BS36ph), thereby blocking expression of pro-adipogenetic genes. Post-translationally, crotonylation (Kcr) is specifically present in male germ cells and marks testis-specific genes in post-meiotic cells, including X-linked genes that escape sex chromosome inactivation in haploid cells. Crotonylation marks active promoters and enhancers and confers resistance to transcriptional repressors. It is also associated with post-meiotically activated genes on autosomes. In terms of processing, lactylated in macrophages by EP300/P300 by using lactoyl-CoA directly derived from endogenous or exogenous lactate, leading to stimulates gene transcription.

The protein localises to the nucleus. Its subcellular location is the chromosome. In terms of biological role, core component of nucleosome. Nucleosomes wrap and compact DNA into chromatin, limiting DNA accessibility to the cellular machineries which require DNA as a template. Histones thereby play a central role in transcription regulation, DNA repair, DNA replication and chromosomal stability. DNA accessibility is regulated via a complex set of post-translational modifications of histones, also called histone code, and nucleosome remodeling. Functionally, has broad antibacterial activity. May contribute to the formation of the functional antimicrobial barrier of the colonic epithelium, and to the bactericidal activity of amniotic fluid. The sequence is that of Histone H2B type 1-J from Homo sapiens (Human).